The sequence spans 423 residues: Probable M18 family aminopeptidase 2 (423 aa).

Residues His84, His157, and His397 each contribute to the Zn(2+) site.

It belongs to the peptidase M18 family. Zn(2+) is required as a cofactor.

The protein is Probable M18 family aminopeptidase 2 (apeB) of Borreliella burgdorferi (strain ATCC 35210 / DSM 4680 / CIP 102532 / B31) (Borrelia burgdorferi).